Consider the following 338-residue polypeptide: Lipoate-protein ligase A (338 aa).

Positions 29 to 216 (PTTQRVLFLW…AFFDYFGEQC (188 aa)) constitute a BPL/LPL catalytic domain. Residues Arg-71, 76–79 (GAVF), and Lys-134 each bind ATP. Lys-134 is a (R)-lipoate binding site.

Belongs to the LplA family. Monomer.

The protein resides in the cytoplasm. The enzyme catalyses L-lysyl-[lipoyl-carrier protein] + (R)-lipoate + ATP = N(6)-[(R)-lipoyl]-L-lysyl-[lipoyl-carrier protein] + AMP + diphosphate + H(+). It functions in the pathway protein modification; protein lipoylation via exogenous pathway; protein N(6)-(lipoyl)lysine from lipoate: step 1/2. Its pathway is protein modification; protein lipoylation via exogenous pathway; protein N(6)-(lipoyl)lysine from lipoate: step 2/2. In terms of biological role, catalyzes both the ATP-dependent activation of exogenously supplied lipoate to lipoyl-AMP and the transfer of the activated lipoyl onto the lipoyl domains of lipoate-dependent enzymes. This chain is Lipoate-protein ligase A, found in Pectobacterium carotovorum subsp. carotovorum (strain PC1).